The primary structure comprises 207 residues: Large ribosomal subunit protein bL25 (207 aa).

It belongs to the bacterial ribosomal protein bL25 family. CTC subfamily. In terms of assembly, part of the 50S ribosomal subunit; part of the 5S rRNA/L5/L18/L25 subcomplex. Contacts the 5S rRNA. Binds to the 5S rRNA independently of L5 and L18.

In terms of biological role, this is one of the proteins that binds to the 5S RNA in the ribosome where it forms part of the central protuberance. In Orientia tsutsugamushi (strain Boryong) (Rickettsia tsutsugamushi), this protein is Large ribosomal subunit protein bL25.